Consider the following 484-residue polypeptide: F-box/LRR-repeat protein At3g59210 (484 aa).

Positions 6–54 (KDIINCLPDNLLCQILSNLSTKEAALTSLLSKRWRYLFALVPNLDFDVL) constitute an F-box domain. LRR repeat units follow at residues 144–170 (KIGP…NLDS), 172–197 (VFEE…SLLN), 205–234 (SCSV…SFDT), 303–334 (TLYL…TIES), and 335–360 (HPEL…VFQG).

This chain is F-box/LRR-repeat protein At3g59210, found in Arabidopsis thaliana (Mouse-ear cress).